We begin with the raw amino-acid sequence, 448 residues long: Histidinol dehydrogenase (448 aa).

Residues Tyr-136, Gln-197, and Asn-220 each contribute to the NAD(+) site. Substrate-binding residues include Ser-243, Gln-265, and His-268. Residues Gln-265 and His-268 each coordinate Zn(2+). Catalysis depends on proton acceptor residues Glu-333 and His-334. His-334, Asp-367, Glu-421, and His-426 together coordinate substrate. A Zn(2+)-binding site is contributed by Asp-367. His-426 contacts Zn(2+).

Belongs to the histidinol dehydrogenase family. It depends on Zn(2+) as a cofactor.

It catalyses the reaction L-histidinol + 2 NAD(+) + H2O = L-histidine + 2 NADH + 3 H(+). Its pathway is amino-acid biosynthesis; L-histidine biosynthesis; L-histidine from 5-phospho-alpha-D-ribose 1-diphosphate: step 9/9. Functionally, catalyzes the sequential NAD-dependent oxidations of L-histidinol to L-histidinaldehyde and then to L-histidine. The sequence is that of Histidinol dehydrogenase from Pseudomonas syringae pv. tomato (strain ATCC BAA-871 / DC3000).